Here is a 1364-residue protein sequence, read N- to C-terminus: MTSSSSKSNKSRKSSKAAKDTTPVHESASRPLSKTPPPFRNHIVDKRGLKQLVAWAYKNHGTAVTSSMADKLKDLGFRYATQAAVSISVNDLQVPEAKKALLGEAEEQITATEERYRLGEITEVERHTKVIDTWTETNERLVDAVKKNFNQNAPLNSVWMMANSGARGNMSQVRQLVGMRGLMANPQGEIIDLPIRTNFREGLTVTEYVISSYGARKGLVDTALRTADSGYLTRRLVDVAQDVIVREDDCGTTRHIVVEAEDGRFGNRLVGRLTASQVVSAVGEVLAERDTEIDPPLSKRIEKAGVTAVSVRSPLTCEANRSVCRKCYGWALAHNELVDLGEAVGIIAAQSIGEPGTQLTMRTFHTGGVSTAETGVVRSVVAGTIEFSAKARVRPYRTPHGVNAQQAEVDFNLSIKPVGKGKTQKIEITNGSLLFVENGQTIDADVTVAQIAAGAVKKSVEKATKDVICDLAGQVRYEEAIQPREVTDRQGNITLKAQRLGRMWVLAGDVYNLPPNAQPVVQGDTEVTEGQVLAEASQRSEYGGDVRLRDSIGDSREVQIVTTAMTLKDFKLLEESTHSGEIWNLEAKDGTRYRLNTIPGSKIGSGEVVAELADDRFRTGTGGLVKFAPGLAIKKARSAKNGYEVNKGGTLLWIPQETHEINKDISLLMITDGQWIEAGTEVVKDIFSQTAGVVTVTQKNDILREIIVRSGDFHLSSDSKALERFEGDGHMVNPGEEIAKGLSIQDMKYVQTVETPEGKGLLLRPVEEYTIPNEAQLPELSHVKQANGPHLGIKATQRLAFKDNELIKSVEGVELLKTQLILETFDTTPQMTVDVEKAPDKRAKTISRLRLVILESILVRRDTMSDSSHGSTHTELQVEDGISVKAGDVIATTQILCKQAGVAQLPEATEADPVRRLLVERPEDTTTLSTSGKPVVAVGQRIVDGELLAEGDPSSCCGEVEAVDSNSVTLRLGRPYMVSPDSVLHVRDGDLVQRGDGLALLVFERQKTGDIVQGLPRIEELLEARRPRESAVLCKKPGTVEIKQGDDDESLTVTVIEADDAIGEYPILLGRNVMVSDGQQVTAGELLTDGPINPHELLECFFEDLRSRKPLMDAAQEAIANLQHRLVTEVQNVYKSQGVSIDDKHIEVIVRQMTSKVRVEDAGDTTLLPGELIELRQVEDTNQAMAITGGAPAEFTPVLLGITKASLNTDSFISAASFQETTRVLTEAAIEGKSDWLRGLKENVIIGRLIPAGTGFSGFEEELQKEAGPHPDILSEDPAGYRRMQNLRPDYTVEMPPAASSTAVLDDPSDADLEATRTRHNIDPSASNFAAFARPDADNELKEEQVVDAEAVEGLQEEGLLSDD.

Positions 1 to 42 (MTSSSSKSNKSRKSSKAAKDTTPVHESASRPLSKTPPPFRNH) are disordered. C250, C317, C324, and C327 together coordinate Zn(2+).

Belongs to the RNA polymerase beta' chain family. RpoC2 subfamily. In terms of assembly, in cyanobacteria the RNAP catalytic core is composed of 2 alpha, 1 beta, 1 beta', 1 gamma and 1 omega subunit. When a sigma factor is associated with the core the holoenzyme is formed, which can initiate transcription. Zn(2+) is required as a cofactor.

It carries out the reaction RNA(n) + a ribonucleoside 5'-triphosphate = RNA(n+1) + diphosphate. Functionally, DNA-dependent RNA polymerase catalyzes the transcription of DNA into RNA using the four ribonucleoside triphosphates as substrates. The chain is DNA-directed RNA polymerase subunit beta' from Parasynechococcus marenigrum (strain WH8102).